Consider the following 360-residue polypeptide: Endolytic peptidoglycan transglycosylase RlpA (360 aa).

The signal sequence occupies residues 1–17 (MRKEWLWVGIASVLLSA). Cysteine 18 carries the N-palmitoyl cysteine lipid modification. Residue cysteine 18 is the site of S-diacylglycerol cysteine attachment. The 77-residue stretch at 283-359 (SAISGGYVVQ…AQQQSFIVAA (77 aa)) folds into the SPOR domain.

The protein belongs to the RlpA family.

Its subcellular location is the cell membrane. In terms of biological role, lytic transglycosylase with a strong preference for naked glycan strands that lack stem peptides. This chain is Endolytic peptidoglycan transglycosylase RlpA, found in Yersinia pestis.